A 656-amino-acid polypeptide reads, in one-letter code: MIKSQKEYLERIEYLNTLSHHYYNLDEPIVSDAVYDELYQELKAYEEENPNRIQANSPTQKVGATATNEFSKNPHLMRMWSLDDVFNQNELRAWLQRILKVYPNASFVCSPKLDGVSLNLLYQHGKLISATTRGNGLEGELVTNNAKHIANIPHSIAYNGEIEIRGEVIISKEDFDALNKERLNANEPLFANPRNAASGSLRQLDSNITKKRKLQFIPWGVGKHSLHFLRFKECLDFIVSLGFSAIQYLSLNKNHQEIEENYHTLIREREGFFALLDGMVIVVDELDIQKELGYTQKSPKFACAYKFPALEKHTKIVGVINQVGRSGAITPVALLEPVEIAGAMVNRATLHNYSEIEKKNIMLNDRVVVIRSGDVIPKIIKPLESYRDGSQQKIMRPKVCPICSHELLCEEIFTYCQNLNCPARLKESLIHFASKDALNIQGLGDKVIEQLFEEKLIFNALDLYALKLEDLMRLDKFKIKKAQNLLDAIQKSKNPPLWRLINALGIEHIGKGASKTLAKYGLNVLEKSEAEFLEMEGFGVEMAHSLVNFYASNQEFIRSLFELLNPKSSDTAEEKQKSSSVFSDKTIVLTGTLSKPRQEYAQMLENLGAKIASSVSAKTDFLIAGENAGSKLALAQKHGVSVLNEEELLKRLKELD.

NAD(+) is bound by residues 32–36 (DAVYD) and 81–82 (SL). Residue K112 is the N6-AMP-lysine intermediate of the active site. Residues R133, E167, and K306 each contribute to the NAD(+) site. C400, C403, C416, and C421 together coordinate Zn(2+). In terms of domain architecture, BRCT spans 577 to 656 (KSSSVFSDKT…ELLKRLKELD (80 aa)).

The protein belongs to the NAD-dependent DNA ligase family. LigA subfamily. Requires Mg(2+) as cofactor. Mn(2+) serves as cofactor.

The catalysed reaction is NAD(+) + (deoxyribonucleotide)n-3'-hydroxyl + 5'-phospho-(deoxyribonucleotide)m = (deoxyribonucleotide)n+m + AMP + beta-nicotinamide D-nucleotide.. In terms of biological role, DNA ligase that catalyzes the formation of phosphodiester linkages between 5'-phosphoryl and 3'-hydroxyl groups in double-stranded DNA using NAD as a coenzyme and as the energy source for the reaction. It is essential for DNA replication and repair of damaged DNA. In Helicobacter pylori (strain J99 / ATCC 700824) (Campylobacter pylori J99), this protein is DNA ligase.